Reading from the N-terminus, the 58-residue chain is Conotoxin Leo-T2 (58 aa).

An N-terminal signal peptide occupies residues 1-22; the sequence is MRCLPVFIILPLLIPSAPSVDA. A propeptide spanning residues 23-47 is cleaved from the precursor; the sequence is QPMTEDDVPLASFHEQTLQELWNKR.

Belongs to the conotoxin T superfamily. Contains 2 disulfide bonds that can be either 'C1-C3, C2-C4' or 'C1-C4, C2-C3', since these disulfide connectivities have been observed for conotoxins with cysteine framework V (for examples, see AC P0DQQ7 and AC P81755). As to expression, expressed by the venom duct.

Its subcellular location is the secreted. This is Conotoxin Leo-T2 from Conus leopardus (Leopard cone).